A 364-amino-acid chain; its full sequence is UDP-3-O-acylglucosamine N-acyltransferase (364 aa).

Histidine 258 serves as the catalytic Proton acceptor.

This sequence belongs to the transferase hexapeptide repeat family. LpxD subfamily. As to quaternary structure, homotrimer.

It carries out the reaction a UDP-3-O-[(3R)-3-hydroxyacyl]-alpha-D-glucosamine + a (3R)-hydroxyacyl-[ACP] = a UDP-2-N,3-O-bis[(3R)-3-hydroxyacyl]-alpha-D-glucosamine + holo-[ACP] + H(+). The protein operates within bacterial outer membrane biogenesis; LPS lipid A biosynthesis. In terms of biological role, catalyzes the N-acylation of UDP-3-O-acylglucosamine using 3-hydroxyacyl-ACP as the acyl donor. Is involved in the biosynthesis of lipid A, a phosphorylated glycolipid that anchors the lipopolysaccharide to the outer membrane of the cell. This chain is UDP-3-O-acylglucosamine N-acyltransferase, found in Burkholderia orbicola (strain AU 1054).